We begin with the raw amino-acid sequence, 215 residues long: AN1-type zinc finger protein C1271.05c (215 aa).

Polar residues predominate over residues 116-128 (IPSISKSNLTNPP). Residues 116–138 (IPSISKSNLTNPPLESEKSSDKA) are disordered. The AN1-type zinc-finger motif lies at 144-193 (ATSRRRCCHPTCTRITLRLAGNCLHCNGRFCAAHRLMEDHDCVALFSLRK). Zn(2+) contacts are provided by Cys150, Cys155, Cys166, Cys169, Cys174, His177, His183, and Cys185.

Its subcellular location is the cytoplasm. The protein resides in the nucleus. The sequence is that of AN1-type zinc finger protein C1271.05c from Schizosaccharomyces pombe (strain 972 / ATCC 24843) (Fission yeast).